Here is a 411-residue protein sequence, read N- to C-terminus: Arginine deiminase (411 aa).

The Amidino-cysteine intermediate role is filled by cysteine 401.

The protein belongs to the arginine deiminase family.

The protein resides in the cytoplasm. The catalysed reaction is L-arginine + H2O = L-citrulline + NH4(+). It functions in the pathway amino-acid degradation; L-arginine degradation via ADI pathway; carbamoyl phosphate from L-arginine: step 1/2. This chain is Arginine deiminase, found in Staphylococcus aureus (strain JH9).